The following is a 135-amino-acid chain: uncharacterized protein (135 aa).

The disordered stretch occupies residues 56 to 135 (VQSHNRGINN…QKGQLKIEKV (80 aa)). Residues 64–74 (NNRRRDQKRKQ) are compositionally biased toward basic residues. Over residues 77–89 (SIKQDNDLNVSSE) the composition is skewed to polar residues. A compositionally biased stretch (basic and acidic residues) spans 108 to 135 (YKETPDLDEPGSREKRVSQKGQLKIEKV).

This is an uncharacterized protein from Schizosaccharomyces pombe (strain 972 / ATCC 24843) (Fission yeast).